The primary structure comprises 371 residues: Dual-specificity RNA methyltransferase RlmN (371 aa).

The Proton acceptor role is filled by E97. One can recognise a Radical SAM core domain in the interval 103 to 341 (DGDRATLCVS…VTVRTTRGDD (239 aa)). The cysteines at positions 110 and 346 are disulfide-linked. Positions 117, 121, and 124 each coordinate [4Fe-4S] cluster. S-adenosyl-L-methionine contacts are provided by residues 171 to 172 (GE), S203, 225 to 227 (SLH), and N303. The S-methylcysteine intermediate role is filled by C346.

Belongs to the radical SAM superfamily. RlmN family. It depends on [4Fe-4S] cluster as a cofactor.

Its subcellular location is the cytoplasm. It catalyses the reaction adenosine(2503) in 23S rRNA + 2 reduced [2Fe-2S]-[ferredoxin] + 2 S-adenosyl-L-methionine = 2-methyladenosine(2503) in 23S rRNA + 5'-deoxyadenosine + L-methionine + 2 oxidized [2Fe-2S]-[ferredoxin] + S-adenosyl-L-homocysteine. The catalysed reaction is adenosine(37) in tRNA + 2 reduced [2Fe-2S]-[ferredoxin] + 2 S-adenosyl-L-methionine = 2-methyladenosine(37) in tRNA + 5'-deoxyadenosine + L-methionine + 2 oxidized [2Fe-2S]-[ferredoxin] + S-adenosyl-L-homocysteine. Its function is as follows. Specifically methylates position 2 of adenine 2503 in 23S rRNA and position 2 of adenine 37 in tRNAs. m2A2503 modification seems to play a crucial role in the proofreading step occurring at the peptidyl transferase center and thus would serve to optimize ribosomal fidelity. The polypeptide is Dual-specificity RNA methyltransferase RlmN (Marinomonas sp. (strain MWYL1)).